A 528-amino-acid polypeptide reads, in one-letter code: Cytochrome P450 monooxygenase lenC (528 aa).

The chain crosses the membrane as a helical span at residues 5–27; sequence FVLPHPASMGASCILGLLLLTIL. Residue Cys-469 coordinates heme.

This sequence belongs to the cytochrome P450 family. Requires heme as cofactor.

Its subcellular location is the membrane. The protein operates within alkaloid biosynthesis. In terms of biological role, nonribosomal peptide synthetase; part of the gene cluster that mediates the biosynthesis of the ergot alkaloids lentopeptins A and B. Within the pathway, lenC catalyzes the post-NRPS oxidative modification steps using as substrate the N-acyldiketopiperazine intermediate produced by the NRPS lenA. Lentopeptin A forms via a stereospecific hydroxylation, followed by a spontaneous bicyclic lactam core formation, while lentopeptin B is produced through an initial dehydrogenation, followed by a bicyclic lactam core formation and stereospecific hydration. The phenylalanine ammonia-lyase lenB provides the cinnamic acid starter unit to the NRPS lenA for the synthesis of the N-acyldiketopiperazine intermediate which in turn is converted into lentopeptins A and B by lenC. The protein is Cytochrome P450 monooxygenase lenC of Aspergillus lentulus.